A 93-amino-acid chain; its full sequence is MNGSQAGAAAQAAWLSSCCNQSASPPEPPEGPRAVQAVVLGVLSLLVLCGVLFLGGGLLLRAQGLTALLTREQRASREPEPGSASGEDGDDDS.

The helical transmembrane segment at 38 to 58 (VVLGVLSLLVLCGVLFLGGGL) threads the bilayer. Residues 71 to 80 (REQRASREPE) are compositionally biased toward basic and acidic residues. A disordered region spans residues 71-93 (REQRASREPEPGSASGEDGDDDS).

It is found in the membrane. The chain is Small integral membrane protein 41 from Homo sapiens (Human).